The following is a 163-amino-acid chain: Large ribosomal subunit protein bL21 (163 aa).

The interval 124-163 is disordered; sequence KETTKKTKATVSIKKTAKKPSEKKSAPQKKAAVVSNNKED.

This sequence belongs to the bacterial ribosomal protein bL21 family. Part of the 50S ribosomal subunit. Contacts protein L20.

Functionally, this protein binds to 23S rRNA in the presence of protein L20. The protein is Large ribosomal subunit protein bL21 of Bartonella quintana (strain Toulouse) (Rochalimaea quintana).